The following is a 102-amino-acid chain: Fe-S protein maturation auxiliary factor YitW (102 aa).

Belongs to the MIP18 family.

In terms of biological role, involved in the maturation of iron-sulfur (Fe-S) proteins. May function as a Fe-S cluster carrier. In Bacillus subtilis (strain 168), this protein is Fe-S protein maturation auxiliary factor YitW (yitW).